The sequence spans 673 residues: DNA ligase (673 aa).

Residues 34–38, 83–84, and glutamate 116 each bind NAD(+); these read DAEYD and SL. The active-site N6-AMP-lysine intermediate is the lysine 118. NAD(+)-binding residues include arginine 139, glutamate 176, lysine 293, and lysine 317. Zn(2+)-binding residues include cysteine 411, cysteine 414, cysteine 429, and cysteine 435. A BRCT domain is found at 595-673; it reads NQQNPFFGKT…EDEFLKWVNS (79 aa).

This sequence belongs to the NAD-dependent DNA ligase family. LigA subfamily. Mg(2+) serves as cofactor. It depends on Mn(2+) as a cofactor.

The catalysed reaction is NAD(+) + (deoxyribonucleotide)n-3'-hydroxyl + 5'-phospho-(deoxyribonucleotide)m = (deoxyribonucleotide)n+m + AMP + beta-nicotinamide D-nucleotide.. In terms of biological role, DNA ligase that catalyzes the formation of phosphodiester linkages between 5'-phosphoryl and 3'-hydroxyl groups in double-stranded DNA using NAD as a coenzyme and as the energy source for the reaction. It is essential for DNA replication and repair of damaged DNA. The protein is DNA ligase of Legionella pneumophila (strain Paris).